A 214-amino-acid chain; its full sequence is uncharacterized protein (214 aa).

Residues 2-118 (KIVIADDHHV…ELVKTRQVHG (117 aa)) form the Response regulatory domain. D53 bears the 4-aspartylphosphate mark. In terms of domain architecture, HTH luxR-type spans 142–207 (EKEKYYQLTR…QAALFAVKYN (66 aa)). A DNA-binding region (H-T-H motif) is located at residues 166 to 185 (NKEIAAALFISEKTVKTHVS).

Phosphorylated by YhcY.

It is found in the cytoplasm. Member of the two-component regulatory system YhcY/YhcZ. This is an uncharacterized protein from Bacillus subtilis (strain 168).